The chain runs to 407 residues: MSRRLFTSESVTEGHPDKIADRISDTVLDALLARDPRARVAVETLITTGQVHIAGEVTTTAYAPIAQLVRDTVLSIGYDSSAKGFDGASCGVSVSIGAQSPDIARGVDTAYERRGGGTAPGGPGDELDRQGAGDQGLMFGYACDETPELMPLPINLAHRLSRRLSEVRKNGTIPYLRPDGKTQVTIEYDGDKAVRLDTVVVSSQHASGIDLDSLLAPDIRRHVVEPVLAGLAEDGIKLDTAGYRLLVNPTGRFEIGGPMGDAGLTGRKIIIDTYGGMARHGGGAFSGKDPSKVDRSAAYAMRWVAKNVVAAGLASRCEVQVAYAIGKAEPVGLFVETFGTATVDVERIEQAIGEVFDLRPAAIIRDLDLLRPIYAKTAAYGHFGRELPEFTWERTDRTEQLIAAAGL.

Residue H15 participates in ATP binding. D17 is a binding site for Mg(2+). Residue E43 coordinates K(+). L-methionine contacts are provided by E56 and Q99. The segment at 99 to 109 is flexible loop; the sequence is QSPDIARGVDT. The segment at 112-131 is disordered; the sequence is ERRGGGTAPGGPGDELDRQG. ATP contacts are provided by residues 179–181, 252–253, D261, 267–268, A284, and K288; these read DGK, RF, and RK. D261 lines the L-methionine pocket. K292 contributes to the L-methionine binding site.

The protein belongs to the AdoMet synthase family. As to quaternary structure, homotetramer; dimer of dimers. It depends on Mg(2+) as a cofactor. K(+) serves as cofactor.

Its subcellular location is the cytoplasm. It carries out the reaction L-methionine + ATP + H2O = S-adenosyl-L-methionine + phosphate + diphosphate. It functions in the pathway amino-acid biosynthesis; S-adenosyl-L-methionine biosynthesis; S-adenosyl-L-methionine from L-methionine: step 1/1. In terms of biological role, catalyzes the formation of S-adenosylmethionine (AdoMet) from methionine and ATP. The overall synthetic reaction is composed of two sequential steps, AdoMet formation and the subsequent tripolyphosphate hydrolysis which occurs prior to release of AdoMet from the enzyme. This Streptomyces fradiae (Streptomyces roseoflavus) protein is S-adenosylmethionine synthase.